The primary structure comprises 360 residues: SPRY domain-containing SOCS box protein 3 (360 aa).

The tract at residues 21-54 is disordered; sequence DQDGRSPALHAEEEAWGYDSDGQHSNSDSDTDLL. The region spanning 84 to 274 is the B30.2/SPRY domain; it reads SLHPFRQIKS…MKVIRSCCCR (191 aa). In terms of domain architecture, SOCS box spans 264–315; that stretch reads SMKVIRSCCCRTSLQYLCCARLRQLLPGSVDSLEVLPLPPGLKQVLSNKLGW. Positions 322-350 are disordered; that stretch reads NRSSQHKGDGSATTSCGSYSDSSCTPGHD. The segment covering 332–346 has biased composition (polar residues); sequence SATTSCGSYSDSSCT.

Belongs to the SPSB family. In terms of assembly, substrate-recognition component of the ECS(SPSB3) complex, composed of spsb3, cul5, elob, elob and rnf7/rbx2.

It is found in the nucleus. It functions in the pathway protein modification; protein ubiquitination. Functionally, substrate-recognition component of a cullin-5-RING E3 ubiquitin-protein ligase complex (ECS complex, also named CRL5 complex), which mediates the ubiquitination and subsequent proteasomal degradation of target proteins. The sequence is that of SPRY domain-containing SOCS box protein 3 (spsb3) from Xenopus laevis (African clawed frog).